The chain runs to 306 residues: Glutathione transport system permease protein GsiC (306 aa).

Topologically, residues Met1–Arg8 are cytoplasmic. A helical membrane pass occupies residues Leu9 to Met29. The Periplasmic segment spans residues Leu30–Thr102. In terms of domain architecture, ABC transmembrane type-1 spans Phe95–Val292. The helical transmembrane segment at Ile103–Trp123 threads the bilayer. Over Arg124 to Thr134 the chain is Cytoplasmic. A helical membrane pass occupies residues Ile135 to Phe155. Over Ser156 to Asp168 the chain is Periplasmic. Residues Ser169 to Ala189 form a helical membrane-spanning segment. The Cytoplasmic segment spans residues Arg190–Met228. Residues Ile229–Val249 traverse the membrane as a helical segment. The Periplasmic segment spans residues Glu250–Glu277. A helical membrane pass occupies residues Ile278–Ala298. Topologically, residues Ile299–Lys306 are cytoplasmic.

Belongs to the binding-protein-dependent transport system permease family. The complex is composed of two ATP-binding proteins (GsiA), two transmembrane proteins (GsiC and GsiD) and a solute-binding protein (GsiB).

The protein resides in the cell inner membrane. Functionally, part of the ABC transporter complex GsiABCD involved in glutathione import. Probably responsible for the translocation of the substrate across the membrane. The polypeptide is Glutathione transport system permease protein GsiC (Shigella flexneri serotype 5b (strain 8401)).